Consider the following 285-residue polypeptide: Neuralized-like protein 2 (285 aa).

A disordered region spans residues 1–28 (MADPSEHVGLGGPRSPARPEPPPTRFHQ). In terms of domain architecture, NHR spans 23–244 (PTRFHQVHGA…STKSVRLVQL (222 aa)). An SOCS box domain is found at 250–285 (SLQTLCRLVIHKRVVHRLAIDVLHLPKGLKDFCKYE).

As to quaternary structure, probable component the ECS(NEURL2) E3 ubiquitin-protein ligase complex consisting of ELOB/Elongin B, ELOC/Elongin C, CUL5, RBX1 and NEURL2. Interacts with CTNNB1. Expressed specifically in skeletal and cardiac muscles.

It localises to the cytoplasm. It functions in the pathway protein modification; protein ubiquitination. Plays an important role in the process of myofiber differentiation and maturation. Probable substrate-recognition component of a SCF-like ECS (Elongin BC-CUL2/5-SOCS-box protein) E3 ubiquitin-protein ligase complex, which mediates the ubiquitination of proteins. Probably contributes to catalysis through recognition and positioning of the substrate and the ubiquitin-conjugating enzyme. During myogenesis, controls the ubiquitination and degradation of the specific pool of CTNNB1/beta-catenin located at the sarcolemma. This Mus musculus (Mouse) protein is Neuralized-like protein 2 (Neurl2).